The chain runs to 231 residues: Cytochrome b-c1 complex subunit Rieske, mitochondrial (231 aa).

The transit peptide at 1–24 (MAPVSIVSRAAMRAAAAPARAVRA) directs the protein to the mitochondrion. Residues 25–32 (LTTSTALQ) constitute a propeptide, removed in mature form. At 33 to 65 (GSSSSTFESPFKGESKAAKVPDFGKYMSKAPPS) the chain is on the mitochondrial matrix side. The helical transmembrane segment at 66–95 (TNMLFSYFMVGTMGAITAAGAKSTIQEFLK) threads the bilayer. Residues 96-231 (NMSASADVLA…FPEEGKLVIG (136 aa)) are Mitochondrial intermembrane-facing. The Rieske domain maps to 134–229 (RHRTPAEIEE…YEFPEEGKLV (96 aa)). [2Fe-2S] cluster contacts are provided by Cys-174, His-176, Cys-193, and His-196. Residues Cys-179 and Cys-195 are joined by a disulfide bond.

This sequence belongs to the Rieske iron-sulfur protein family. In terms of assembly, component of the ubiquinol-cytochrome c oxidoreductase (cytochrome b-c1 complex, complex III, CIII), a multisubunit enzyme composed of 10 subunits. The complex is composed of 3 respiratory subunits cytochrome b (cob), cytochrome c1 (cyt-1) and Rieske protein (fes-1), 2 core protein subunits pep and ucr-1, and 5 low-molecular weight protein subunits qcr6, qcr7, qcr8, qcr9 and probably NCU16844/qcr10. The complex exists as an obligatory dimer and forms supercomplexes (SCs) in the inner mitochondrial membrane with NADH-ubiquinone oxidoreductase (complex I, CI) and cytochrome c oxidase (complex IV, CIV), resulting in different assemblies (supercomplexes SCI(1)III(2), SCIII(2)IV(1) and SCIII(2)IV(2) as well as higher order I(x)III(y)IV(z) megacomplexes). [2Fe-2S] cluster serves as cofactor. In terms of processing, processed by both the mitochondrial processing peptidase (MPP) and the mitochondrial intermediate protease (MIP). Initially, MPP removes 25 amino acids from the newly imported precursor in the mitochondrial matrix. This proteolytic processing is then followed by a second proteolytic cleavage by MIP, which removes an octapeptide to generate mature-sized Rieske protein.

Its subcellular location is the mitochondrion inner membrane. It carries out the reaction a quinol + 2 Fe(III)-[cytochrome c](out) = a quinone + 2 Fe(II)-[cytochrome c](out) + 2 H(+)(out). Component of the ubiquinol-cytochrome c oxidoreductase, a multisubunit transmembrane complex that is part of the mitochondrial electron transport chain which drives oxidative phosphorylation. The respiratory chain contains 3 multisubunit complexes succinate dehydrogenase (complex II, CII), ubiquinol-cytochrome c oxidoreductase (cytochrome b-c1 complex, complex III, CIII) and cytochrome c oxidase (complex IV, CIV), that cooperate to transfer electrons derived from NADH and succinate to molecular oxygen, creating an electrochemical gradient over the inner membrane that drives transmembrane transport and the ATP synthase. The cytochrome b-c1 complex catalyzes electron transfer from ubiquinol to cytochrome c, linking this redox reaction to translocation of protons across the mitochondrial inner membrane, with protons being carried across the membrane as hydrogens on the quinol. In the process called Q cycle, 2 protons are consumed from the matrix, 4 protons are released into the intermembrane space and 2 electrons are passed to cytochrome c. The Rieske protein is a catalytic core subunit containing a [2Fe-2S] iron-sulfur cluster. It cycles between 2 conformational states during catalysis to transfer electrons from the quinol bound in the Q(0) site in cytochrome b to cytochrome c1. The polypeptide is Cytochrome b-c1 complex subunit Rieske, mitochondrial (fes-1) (Neurospora crassa (strain ATCC 24698 / 74-OR23-1A / CBS 708.71 / DSM 1257 / FGSC 987)).